The sequence spans 238 residues: MSTIKIEKKSQLVKEVFDSVASRYDTMNDIMSLGMHRLWKDKMVNSVHFTKNSKVLDVAGGTGDIAIRVVRKEPSAKVTVCDINQNMLNRGRDKAINSNQINFDWVCASAESLPFEDSEFDYCTIAFGIRNVSDRKKALNEAHRVLKPHGKFICLEFAPMHYQNEIFTKLYDLYSFKVIPKIGSIVAKDKSSYEYLVRSIREFPTQADFKMEIEEVGFKNVEFHNMSYGIVALHIGTK.

The S-adenosyl-L-methionine site is built by Thr-62 and Asp-82.

The protein belongs to the class I-like SAM-binding methyltransferase superfamily. MenG/UbiE family.

The enzyme catalyses a 2-demethylmenaquinol + S-adenosyl-L-methionine = a menaquinol + S-adenosyl-L-homocysteine + H(+). The catalysed reaction is a 2-methoxy-6-(all-trans-polyprenyl)benzene-1,4-diol + S-adenosyl-L-methionine = a 5-methoxy-2-methyl-3-(all-trans-polyprenyl)benzene-1,4-diol + S-adenosyl-L-homocysteine + H(+). Its pathway is quinol/quinone metabolism; menaquinone biosynthesis; menaquinol from 1,4-dihydroxy-2-naphthoate: step 2/2. It functions in the pathway cofactor biosynthesis; ubiquinone biosynthesis. In terms of biological role, methyltransferase required for the conversion of demethylmenaquinol (DMKH2) to menaquinol (MKH2) and the conversion of 2-polyprenyl-6-methoxy-1,4-benzoquinol (DDMQH2) to 2-polyprenyl-3-methyl-6-methoxy-1,4-benzoquinol (DMQH2). The sequence is that of Ubiquinone/menaquinone biosynthesis C-methyltransferase UbiE from Wolbachia pipientis wMel.